The sequence spans 372 residues: MLSAAFITLLRSGGNQVKKRVLLSSILLQDHRQATPACYFSTSEARCSRFDPDGSGQPATWDNFGIWDNRIDEPILLPPSIKYGKPIPKISLENVGCASLIGKRKENEDRFGFAQLTEEVLYFAVYDGHGGPAAADFCHTHMEKCVMDLLPREKDLETVLTLAFLEIDKAFASYAHLSADASLLTSGTTATVALLRDGVELVVASVGDSRALLCRKGKPMKLTTDHTPERKDEKERIKKFGGFVAWNSLGQPHVNGRLAMTRSIGDLDLKASGVIAEPETTRIKLYHADDSFLVLTTDGINFMVNSQEICDFVNQCHDPKEAAHSVTEQAIQYGTEDNSTAVVVPFGAWGKYKNSEITFSFSRSFASSGRWA.

The N-terminal 29 residues, 1 to 29 (MLSAAFITLLRSGGNQVKKRVLLSSILLQ), are a transit peptide targeting the mitochondrion. Positions 46–61 (RCSRFDPDGSGQPATW) are critical for association with the BCKDH complex. A PPM-type phosphatase domain is found at 94-346 (NVGCASLIGK…DNSTAVVVPF (253 aa)). 2 residues coordinate Mn(2+): D127 and G128. S248 carries the post-translational modification Phosphoserine. Mn(2+) is bound by residues D298 and D337.

The protein belongs to the PP2C family. As to quaternary structure, monomer. Interacts with E1 and E2 components of the branched-chain alpha-ketoacid dehydrogenase (BCKDH) complex; this interaction requires colocalization in mitochondria. Interacts with BCKDHA but not with BCKDHB of the E1 component. Interacts with the 24-meric E2 core composed of DBT monomers with a 24:1 stoichiometry; the N-terminal region (residues 49-61) of PPM1K and C-terminal linker of the lipoyl domain of DBT (residues 145-160) are critical for this interaction, whereas the lipoyl prosthetic group is dispensable. Competes with BCKDK for binding to the E2 core; this interaction is modulated by branched-chain alpha-keto acids. At steady state, BCKDH holoenzyme preferentially binds BCKDK and BCKDHA is phosphorylated. In response to high levels of branched-chain alpha-keto acids, the inhibitory BCKDK is replaced by activating PPM1K leading to BCKDHA dephosphorylation and BCAA degradation. Requires Mn(2+) as cofactor. In terms of tissue distribution, highly expressed in the heart, kidney, brain and liver and to a lesser extent in testis, lung, spleen and adipose tissue. Very low amount in muscle (at protein level). Also expressed in the thymus (at protein level) and the diaphragm. Significantly reduced in hypertrophied hearts.

Its subcellular location is the mitochondrion matrix. The enzyme catalyses O-phospho-L-seryl-[3-methyl-2-oxobutanoate dehydrogenase] + H2O = L-seryl-[3-methyl-2-oxobutanoate dehydrogenase] + phosphate. It carries out the reaction O-phospho-L-seryl-[protein] + H2O = L-seryl-[protein] + phosphate. It participates in protein modification. Serine/threonine-protein phosphatase component of macronutrients metabolism. Forms a functional kinase and phosphatase pair with BCKDK, serving as a metabolic regulatory node that coordinates branched-chain amino acids (BCAAs) with glucose and lipid metabolism via two distinct phosphoprotein targets: mitochondrial BCKDHA subunit of the branched-chain alpha-ketoacid dehydrogenase (BCKDH) complex and cytosolic ACLY, a lipogenic enzyme of Krebs cycle. At high levels of branched-chain ketoacids, dephosphorylates and activates mitochondrial BCKDH complex, a multisubunit complex consisting of three multimeric components each involved in different steps of BCAA catabolism: E1 composed of BCKDHA and BCKDHB, E2 core composed of DBT monomers, and E3 composed of DLD monomers. Tightly associates with the E2 component of BCKDH complex and dephosphorylates BCKDHA on Ser-334. Regulates the reversible phosphorylation of ACLY in response to changes in cellular carbohydrate abundance such as occurs during fasting to feeding metabolic transition. At fasting state, appears to dephosphorylate ACLY on Ser-455 and inactivate it. Refeeding stimulates MLXIPL/ChREBP transcription factor, leading to increased BCKDK to PPM1K expression ratio, phosphorylation and activation of ACLY that ultimately results in the generation of malonyl-CoA and oxaloacetate immediate substrates of de novo lipogenesis and gluconeogenesis, respectively. Recognizes phosphosites having SxS or RxxS motifs and strictly depends on Mn(2+) ions for the phosphatase activity. Regulates Ca(2+)-induced opening of mitochondrial transition pore and apoptotic cell death. In Mus musculus (Mouse), this protein is Protein phosphatase Mn(2+)-dependent 1K.